A 172-amino-acid chain; its full sequence is RNA pyrophosphohydrolase (172 aa).

Residues 8–153 (QHRPNVGVVL…KRGVYEAVVA (146 aa)) form the Nudix hydrolase domain. Residues 43-64 (GGVDEGEDLEVAARRELAEETG) carry the Nudix box motif.

It belongs to the Nudix hydrolase family. RppH subfamily. A divalent metal cation is required as a cofactor.

Its function is as follows. Accelerates the degradation of transcripts by removing pyrophosphate from the 5'-end of triphosphorylated RNA, leading to a more labile monophosphorylated state that can stimulate subsequent ribonuclease cleavage. The protein is RNA pyrophosphohydrolase of Caulobacter vibrioides (strain ATCC 19089 / CIP 103742 / CB 15) (Caulobacter crescentus).